The sequence spans 366 residues: Phospho-N-acetylmuramoyl-pentapeptide-transferase (366 aa).

Helical transmembrane passes span 25-45 (AGAA…AIIN), 70-90 (GTPT…SLLW), 93-113 (LSNV…AIGF), 134-154 (LGIE…MALA), 174-194 (FVIN…VGAG), 205-225 (GLAI…AYLA), 245-265 (LAVI…FNAP), 268-288 (AIFM…SIAV), 297-317 (VIVG…VFWF), and 343-363 (QVVI…LATL).

The protein belongs to the glycosyltransferase 4 family. MraY subfamily. It depends on Mg(2+) as a cofactor.

The protein resides in the cell inner membrane. It carries out the reaction UDP-N-acetyl-alpha-D-muramoyl-L-alanyl-gamma-D-glutamyl-meso-2,6-diaminopimeloyl-D-alanyl-D-alanine + di-trans,octa-cis-undecaprenyl phosphate = di-trans,octa-cis-undecaprenyl diphospho-N-acetyl-alpha-D-muramoyl-L-alanyl-D-glutamyl-meso-2,6-diaminopimeloyl-D-alanyl-D-alanine + UMP. It functions in the pathway cell wall biogenesis; peptidoglycan biosynthesis. Catalyzes the initial step of the lipid cycle reactions in the biosynthesis of the cell wall peptidoglycan: transfers peptidoglycan precursor phospho-MurNAc-pentapeptide from UDP-MurNAc-pentapeptide onto the lipid carrier undecaprenyl phosphate, yielding undecaprenyl-pyrophosphoryl-MurNAc-pentapeptide, known as lipid I. The sequence is that of Phospho-N-acetylmuramoyl-pentapeptide-transferase from Agrobacterium fabrum (strain C58 / ATCC 33970) (Agrobacterium tumefaciens (strain C58)).